Consider the following 367-residue polypeptide: Phospho-N-acetylmuramoyl-pentapeptide-transferase (367 aa).

The next 10 helical transmembrane spans lie at 16–36, 62–82, 87–107, 125–145, 158–178, 190–210, 214–234, 240–260, 264–284, and 326–346; these read LLLAAAAFVLTLIIGGWWVRF, TMGGIMIVSTVLILTILFNLV, MLLPLGVMVSFAVLGAIDDWL, FWIMMAVAFVASLALYLPQPY, VGEVNIGLWFIPIAVLIIVFI, SLAGWNLTLAFGAYGVITFLA, LTNLMAFCFTVVGACAAFLWY, QVFMGDLGALALGATLAVVAL, QWLLLPVIGIVFVVEALSTMI, and FVLIGTVAAMVGISLALIFGP.

This sequence belongs to the glycosyltransferase 4 family. MraY subfamily. Mg(2+) is required as a cofactor.

It localises to the cell membrane. It catalyses the reaction UDP-N-acetyl-alpha-D-muramoyl-L-alanyl-gamma-D-glutamyl-meso-2,6-diaminopimeloyl-D-alanyl-D-alanine + di-trans,octa-cis-undecaprenyl phosphate = di-trans,octa-cis-undecaprenyl diphospho-N-acetyl-alpha-D-muramoyl-L-alanyl-D-glutamyl-meso-2,6-diaminopimeloyl-D-alanyl-D-alanine + UMP. It functions in the pathway cell wall biogenesis; peptidoglycan biosynthesis. Catalyzes the initial step of the lipid cycle reactions in the biosynthesis of the cell wall peptidoglycan: transfers peptidoglycan precursor phospho-MurNAc-pentapeptide from UDP-MurNAc-pentapeptide onto the lipid carrier undecaprenyl phosphate, yielding undecaprenyl-pyrophosphoryl-MurNAc-pentapeptide, known as lipid I. This is Phospho-N-acetylmuramoyl-pentapeptide-transferase from Chloroflexus aurantiacus (strain ATCC 29366 / DSM 635 / J-10-fl).